A 60-amino-acid chain; its full sequence is Potassium channel toxin alpha-KTx 15.8 (60 aa).

The signal sequence occupies residues 1–22 (MKFSSIILLTLLICSMSIFGNC). Residue Gln23 is modified to Pyrrolidone carboxylic acid. 3 disulfides stabilise this stretch: Cys30/Cys50, Cys35/Cys55, and Cys39/Cys57.

It belongs to the short scorpion toxin superfamily. Potassium channel inhibitor family. Alpha-KTx 15 subfamily. Expressed by the venom gland.

Its subcellular location is the secreted. Its function is as follows. Blocker of A-type voltage-gated potassium channels of cerebellar granular cells. May also inhibit Kv4/KCND when coexpressed with DPP6 or DPP10. The occlusion of the outer entry of the K(+) conducting pore is partially reversible and affects both open and closed channels. It shares the same target in rat brain than BmTX3 (AC Q8I0L5) and AmmTX3 (AC P60208). Also shows a weak inhibition on Kv1.2/KCNA2 and Kv1.3/KCNA3 voltage-gated potassium channels. In Olivierus martensii (Manchurian scorpion), this protein is Potassium channel toxin alpha-KTx 15.8.